A 505-amino-acid chain; its full sequence is Maturase K (505 aa).

This sequence belongs to the intron maturase 2 family. MatK subfamily.

It is found in the plastid. The protein resides in the chloroplast. Its function is as follows. Usually encoded in the trnK tRNA gene intron. Probably assists in splicing its own and other chloroplast group II introns. This Physcomitrium patens (Spreading-leaved earth moss) protein is Maturase K.